The chain runs to 485 residues: Homospermidine synthase (485 aa).

This sequence belongs to the saccharopine dehydrogenase family. Requires NAD(+) as cofactor.

It catalyses the reaction 2 putrescine = sym-homospermidine + NH4(+). The enzyme catalyses putrescine + spermidine = sym-homospermidine + propane-1,3-diamine. Its function is as follows. Involved in the NAD(+)-dependent synthesis of the polyamine homospermidine from putrescine. This chain is Homospermidine synthase (hss), found in Mesorhizobium japonicum (strain LMG 29417 / CECT 9101 / MAFF 303099) (Mesorhizobium loti (strain MAFF 303099)).